Here is an 864-residue protein sequence, read N- to C-terminus: Leucine--tRNA ligase (864 aa).

The short motif at 57–67 (PYPSGNLHMGH) is the 'HIGH' region element. A 'KMSKS' region motif is present at residues 628–632 (KMSKS). Lys-631 contacts ATP.

It belongs to the class-I aminoacyl-tRNA synthetase family.

The protein localises to the cytoplasm. It catalyses the reaction tRNA(Leu) + L-leucine + ATP = L-leucyl-tRNA(Leu) + AMP + diphosphate. The chain is Leucine--tRNA ligase from Prochlorococcus marinus (strain MIT 9515).